Reading from the N-terminus, the 511-residue chain is MKRRALVSVSNKEGIVPFAKALVEHEVEIVSTGGTKRALQEAGIPVTGISDVTGFPEILDGRVKTLHPNIHGGLLAMRERDEHLAQLNEHHIRPIDFVVVNLYPFQQTIAKPEATFADAIENIDIGGPSMLRAAAKNHQHVTVVVDPVDYETVLKELADQGNVATETKRRLAAKVFRHTAAYDAMIAEYLTDAVGEESPESLTVTFEKKQDLRYGENPHQKATFYQKPLGAKASIAHAKQLHGKELSYNNINDADAALSIVKEFKEPAAVAVKHMNPCGVGTGETIKEAFDKAYEADPVSIFGGIIALNREVDVETAKTLKEIFLEIIIAPSFSEEALDVLTSKKNLRLLTLPLNEENQAEKRITSIHGGALVQEEDTYGFEEAEIKIPTKREPTEAEWEALKLAWRVVKHVKSNAIVLADGQMTVGVGAGQMNRVGAAKIAIEQAGEKAAGSVMGSDAFFPMGDTVELAAKAGITAIIQPGGSIRDEESIENADKHGIAMVFTGVRHFKH.

Positions 1–145 constitute an MGS-like domain; that stretch reads MKRRALVSVS…KNHQHVTVVV (145 aa).

Belongs to the PurH family.

It catalyses the reaction (6R)-10-formyltetrahydrofolate + 5-amino-1-(5-phospho-beta-D-ribosyl)imidazole-4-carboxamide = 5-formamido-1-(5-phospho-D-ribosyl)imidazole-4-carboxamide + (6S)-5,6,7,8-tetrahydrofolate. The catalysed reaction is IMP + H2O = 5-formamido-1-(5-phospho-D-ribosyl)imidazole-4-carboxamide. The protein operates within purine metabolism; IMP biosynthesis via de novo pathway; 5-formamido-1-(5-phospho-D-ribosyl)imidazole-4-carboxamide from 5-amino-1-(5-phospho-D-ribosyl)imidazole-4-carboxamide (10-formyl THF route): step 1/1. It participates in purine metabolism; IMP biosynthesis via de novo pathway; IMP from 5-formamido-1-(5-phospho-D-ribosyl)imidazole-4-carboxamide: step 1/1. In Halalkalibacterium halodurans (strain ATCC BAA-125 / DSM 18197 / FERM 7344 / JCM 9153 / C-125) (Bacillus halodurans), this protein is Bifunctional purine biosynthesis protein PurH.